Reading from the N-terminus, the 269-residue chain is Protein shisa-1 (269 aa).

An N-terminal signal peptide occupies residues 1–18; sequence MEFIVLLTVCALLGLSCG. Residues 19–98 are Extracellular-facing; sequence QHGEYCHGWT…LPPTVPTYFP (80 aa). A helical membrane pass occupies residues 99 to 119; it reads FLLVGSIFVSFVILGSLVGLC. The Cytoplasmic segment spans residues 120–269; it reads CCKCLKPEDD…TVCSGSPSKC (150 aa). The segment at 129-167 is disordered; it reads DTQVSGPAPIQSRLLDQDPSTDTSRHSSSSSASMPRPPI. The span at 146 to 162 shows a compositional bias: low complexity; it reads DPSTDTSRHSSSSSASM.

It belongs to the shisa family. Interacts with immature forms of fzd8 and fgfr.

It localises to the endoplasmic reticulum. Its subcellular location is the membrane. Functionally, required for head formation during gastrulation. Functions as an inhibitor for the caudalizing signals wnt and fgf, does not inhibit bmp, activin and nodal signaling in head formation process. Induces retention of fzd8 in the endoplasmic reticulum and inhibits trafficking of fzd8 to the cell surface. The chain is Protein shisa-1 (shisa1) from Xenopus laevis (African clawed frog).